Consider the following 312-residue polypeptide: Aspartate carbamoyltransferase catalytic subunit (312 aa).

Carbamoyl phosphate contacts are provided by arginine 55 and threonine 56. Position 83 (lysine 83) interacts with L-aspartate. Arginine 105, histidine 138, and glutamine 141 together coordinate carbamoyl phosphate. Residues arginine 171 and arginine 225 each coordinate L-aspartate. Residues glycine 266 and proline 267 each contribute to the carbamoyl phosphate site.

The protein belongs to the aspartate/ornithine carbamoyltransferase superfamily. ATCase family. Heterododecamer (2C3:3R2) of six catalytic PyrB chains organized as two trimers (C3), and six regulatory PyrI chains organized as three dimers (R2).

It catalyses the reaction carbamoyl phosphate + L-aspartate = N-carbamoyl-L-aspartate + phosphate + H(+). It participates in pyrimidine metabolism; UMP biosynthesis via de novo pathway; (S)-dihydroorotate from bicarbonate: step 2/3. In terms of biological role, catalyzes the condensation of carbamoyl phosphate and aspartate to form carbamoyl aspartate and inorganic phosphate, the committed step in the de novo pyrimidine nucleotide biosynthesis pathway. In Corynebacterium glutamicum (strain R), this protein is Aspartate carbamoyltransferase catalytic subunit.